We begin with the raw amino-acid sequence, 268 residues long: MICOS complex subunit MIC27 (268 aa).

A mitochondrion-targeting transit peptide spans 1–27; the sequence is MAAIRMGKLTTMPAGLIYASVSVHAAK. Residues 28–110 lie on the Mitochondrial intermembrane side of the membrane; it reads QEESKKQLVK…YVYLKNPPRD (83 aa). Residues 111-129 traverse the membrane as a helical segment; the sequence is FLPKMGVITVSGLAGLVSA. Residues 130-137 are Mitochondrial matrix-facing; the sequence is RKGSKFKK. Residues 138–155 traverse the membrane as a helical segment; it reads ITYPLGLATLGATVCYPV. At 156-268 the chain is on the mitochondrial intermembrane side; sequence QSVIIAKVTA…EDIDMYSTRS (113 aa). The segment covering 187-200 has biased composition (basic and acidic residues); sequence SKEESLPKPKEKTK. The segment at 187-268 is disordered; sequence SKEESLPKPK…EDIDMYSTRS (82 aa). Serine 204 is subject to Phosphoserine. Residues 249 to 260 are compositionally biased toward basic and acidic residues; sequence KLMDHGQSHPED.

This sequence belongs to the apolipoprotein O/MICOS complex subunit Mic27 family. Component of the mitochondrial contact site and cristae organizing system (MICOS) complex, composed of at least MICOS10/MIC10, CHCHD3/MIC19, CHCHD6/MIC25, APOOL/MIC27, IMMT/MIC60, APOO/MIC23/MIC26 and MICOS13/MIC13. This complex was also known under the names MINOS or MitOS complex. The MICOS complex associates with mitochondrial outer membrane proteins SAMM50, MTX1 and MTX2 (together described as components of the mitochondrial outer membrane sorting assembly machinery (SAM) complex) and DNAJC11, mitochondrial inner membrane protein TMEM11 and with HSPA9. The MICOS and SAM complexes together with DNAJC11 are part of a large protein complex spanning both membranes termed the mitochondrial intermembrane space bridging (MIB) complex. Interacts with MICOS10/MIC10, IMMT/MIC60 and APOO/MIC23/MIC26.

The protein resides in the mitochondrion inner membrane. The protein localises to the mitochondrion. In terms of biological role, component of the MICOS complex, a large protein complex of the mitochondrial inner membrane that plays crucial roles in the maintenance of crista junctions, inner membrane architecture, and formation of contact sites to the outer membrane. Specifically binds to cardiolipin (in vitro) but not to the precursor lipid phosphatidylglycerol. Plays a crucial role in crista junction formation and mitochondrial function,. The protein is MICOS complex subunit MIC27 (APOOL) of Homo sapiens (Human).